Reading from the N-terminus, the 181-residue chain is Secreted chorismate mutase (181 aa).

Residues 1-20 form the signal peptide; that stretch reads MLASVALAALAGVGTPHATA. Residues 21–100 form the Chorismate mutase domain; it reads DDASPLVPLV…ATSSVEHTRF (80 aa). Substrate is bound by residues Arg-36, Lys-47, Asp-56, 59–63, 92–96, and Arg-121; these read REQQV and TSSVE. A disulfide bond links Cys-147 and Cys-180.

Homodimer.

Its subcellular location is the secreted. It catalyses the reaction chorismate = prephenate. It functions in the pathway metabolic intermediate biosynthesis; prephenate biosynthesis; prephenate from chorismate: step 1/1. Functionally, catalyzes the Claisen rearrangement of chorismate to prephenate. May play some role in the pathogenicity. The protein is Secreted chorismate mutase of Mycolicibacterium smegmatis (strain ATCC 700084 / mc(2)155) (Mycobacterium smegmatis).